We begin with the raw amino-acid sequence, 206 residues long: MSNLKPDVEHCTGAGTGSPLEEEVRTLFVSGLPVDIKPRELYLLFRPFKGYEGSLIKLTSRQPVGFVIFDSRAGAEAAKNALNGIRFDPENPQTLRLEFAKANTKMAKSKLIATPNPTSVHPALGAHLIARDPYDLMGTALIPASPEAWAPYPLYTTELTPAISHTTFTYPAATAAAAAAATLHAQVRWYPSSDTTQQGWKYRQFC.

Ser-2 carries the post-translational modification N-acetylserine. An RRM domain is found at 25–102 (RTLFVSGLPV…QTLRLEFAKA (78 aa)). The tract at residues 35-45 (DIKPRELYLLF) is important for homodimerization.

As to quaternary structure, homodimer. Interacts with EEF2.

It is found in the cytoplasm. It localises to the nucleus. Its subcellular location is the stress granule. In terms of biological role, RNA-binding protein involved in the regulation of smooth muscle cell differentiation and proliferation in the gastrointestinal system. Binds NOG mRNA, the major inhibitor of the bone morphogenetic protein (BMP) pathway. Mediates an increase of NOG mRNA levels, thereby contributing to the negative regulation of BMP signaling pathway and promoting reversible dedifferentiation and proliferation of smooth muscle cells. Acts as a pre-mRNA alternative splicing regulator. Mediates ACTN1 and FLNB alternative splicing. Likely binds to mRNA tandem CAC trinucleotide or CA dinucleotide motifs. This Mus musculus (Mouse) protein is RNA-binding protein with multiple splicing 2 (Rbpms2).